A 1410-amino-acid polypeptide reads, in one-letter code: Endoribonuclease Dicer homolog 2a (1410 aa).

A compositionally biased stretch (gly residues) spans 1-15; it reads MGGPLTAAGGRGDGG. The disordered stretch occupies residues 1 to 30; that stretch reads MGGPLTAAGGRGDGGAKAVEPLRPPPPPDP. One can recognise a Helicase ATP-binding domain in the interval 41–222; sequence ALERAVRGNT…HNYSKQISEI (182 aa). 54–61 lines the ATP pocket; the sequence is LETGSGKT. The short motif at 163–166 is the DECH box element; it reads DECH. The Helicase C-terminal domain maps to 388–561; the sequence is TLLQYRHMQD…DTYYRVESTR (174 aa). The 87-residue stretch at 569–655 folds into the Dicer dsRNA-binding fold domain; it reads SVPLIHFFCS…LPELDVPCDE (87 aa). The 116-residue stretch at 827 to 942 folds into the PAZ domain; the sequence is KDIDLLQTKD…LPPELCRIIM (116 aa). 2 consecutive RNase III domains span residues 969 to 1124 and 1161 to 1308; these read SVKL…STAG and VRSL…LDSK. Mg(2+)-binding residues include Glu1200, Asp1294, and Glu1297. Residues 1334 to 1400 enclose the DRBM domain; it reads DPVKGLQEFC…SKAVLKDLIA (67 aa).

This sequence belongs to the helicase family. Dicer subfamily. May interact with ARGONAUTE1 or PINHEAD through their common PAZ domains. The cofactor is Mg(2+). It depends on Mn(2+) as a cofactor.

The protein localises to the nucleus. Probably involved in the RNA silencing pathway. May cleave double-stranded RNA to produce short 21-24 nucleotides (nt) RNAs which target the selective destruction of complementary RNAs. This Oryza sativa subsp. japonica (Rice) protein is Endoribonuclease Dicer homolog 2a (DCL2A).